The sequence spans 288 residues: 33 kDa chaperonin (288 aa).

2 cysteine pairs are disulfide-bonded: C236–C238 and C269–C272.

Belongs to the HSP33 family. Under oxidizing conditions two disulfide bonds are formed involving the reactive cysteines. Under reducing conditions zinc is bound to the reactive cysteines and the protein is inactive.

The protein resides in the cytoplasm. Functionally, redox regulated molecular chaperone. Protects both thermally unfolding and oxidatively damaged proteins from irreversible aggregation. Plays an important role in the bacterial defense system toward oxidative stress. The sequence is that of 33 kDa chaperonin from Syntrophotalea carbinolica (strain DSM 2380 / NBRC 103641 / GraBd1) (Pelobacter carbinolicus).